The following is a 221-amino-acid chain: Protein-L-isoaspartate O-methyltransferase (221 aa).

Ser-60 is an active-site residue.

The protein belongs to the methyltransferase superfamily. L-isoaspartyl/D-aspartyl protein methyltransferase family.

It localises to the cytoplasm. It carries out the reaction [protein]-L-isoaspartate + S-adenosyl-L-methionine = [protein]-L-isoaspartate alpha-methyl ester + S-adenosyl-L-homocysteine. Functionally, catalyzes the methyl esterification of L-isoaspartyl residues in peptides and proteins that result from spontaneous decomposition of normal L-aspartyl and L-asparaginyl residues. It plays a role in the repair and/or degradation of damaged proteins. The protein is Protein-L-isoaspartate O-methyltransferase of Rhodospirillum centenum (strain ATCC 51521 / SW).